The primary structure comprises 223 residues: Thymine-DNA glycosylase (223 aa).

4 residues coordinate [4Fe-4S] cluster: Cys-201, Cys-208, Cys-211, and Cys-217.

The protein belongs to the Nth/MutY family. Requires [4Fe-4S] cluster as cofactor.

It carries out the reaction Hydrolyzes mismatched double-stranded DNA and polynucleotides, releasing free thymine.. Its activity is regulated as follows. Thymine cleavage is completely inhibited by Ni(2+), Co(2+), Zn(2+), Cu(2+) and Mn(2+). Activity is not affected by Mg(2+) and Ca(2+). In terms of biological role, DNA glycosylase that excises thymine from T/G mismatches. Also has a weak DNA glycosylase activity on uracil paired with various bases. This Aeropyrum pernix (strain ATCC 700893 / DSM 11879 / JCM 9820 / NBRC 100138 / K1) protein is Thymine-DNA glycosylase.